A 342-amino-acid polypeptide reads, in one-letter code: N-acetyl-gamma-glutamyl-phosphate reductase (342 aa).

Cys156 is an active-site residue.

Belongs to the NAGSA dehydrogenase family. Type 1 subfamily.

It localises to the cytoplasm. The enzyme catalyses N-acetyl-L-glutamate 5-semialdehyde + phosphate + NADP(+) = N-acetyl-L-glutamyl 5-phosphate + NADPH + H(+). It participates in amino-acid biosynthesis; L-arginine biosynthesis; N(2)-acetyl-L-ornithine from L-glutamate: step 3/4. Catalyzes the NADPH-dependent reduction of N-acetyl-5-glutamyl phosphate to yield N-acetyl-L-glutamate 5-semialdehyde. The polypeptide is N-acetyl-gamma-glutamyl-phosphate reductase (Pseudoalteromonas atlantica (strain T6c / ATCC BAA-1087)).